Consider the following 342-residue polypeptide: Serine/threonine-protein kinase ISR1 (342 aa).

The Protein kinase domain maps to 59–342; sequence WRLTRVLGCG…SNARVAEHAF (284 aa). Residues 65–73 and Lys84 each bind ATP; that span reads LGCGSVACV. Asp190 serves as the catalytic Proton acceptor.

The protein belongs to the protein kinase superfamily. Ser/Thr protein kinase family.

It carries out the reaction L-seryl-[protein] + ATP = O-phospho-L-seryl-[protein] + ADP + H(+). The enzyme catalyses L-threonyl-[protein] + ATP = O-phospho-L-threonyl-[protein] + ADP + H(+). Functionally, probable serine/threonine protein kinase which may function redundantly with MPK1-independent branch of the PCK1 pathway. This Eremothecium gossypii (strain ATCC 10895 / CBS 109.51 / FGSC 9923 / NRRL Y-1056) (Yeast) protein is Serine/threonine-protein kinase ISR1 (ISR1).